The chain runs to 675 residues: Methionine--tRNA ligase (675 aa).

The 'HIGH' region motif lies at 15–25; it reads PYANGPIHLGH. The Zn(2+) site is built by C146, C149, C159, and C162. The 'KMSKS' region signature appears at 332 to 336; the sequence is KMSKS. K335 provides a ligand contact to ATP. Residues 574-675 enclose the tRNA-binding domain; that stretch reads DFAKIDLRVA…AGAKPGMRVK (102 aa).

Belongs to the class-I aminoacyl-tRNA synthetase family. MetG type 1 subfamily. As to quaternary structure, homodimer. Requires Zn(2+) as cofactor.

The protein resides in the cytoplasm. The catalysed reaction is tRNA(Met) + L-methionine + ATP = L-methionyl-tRNA(Met) + AMP + diphosphate. In terms of biological role, is required not only for elongation of protein synthesis but also for the initiation of all mRNA translation through initiator tRNA(fMet) aminoacylation. In Shewanella amazonensis (strain ATCC BAA-1098 / SB2B), this protein is Methionine--tRNA ligase.